Here is a 521-residue protein sequence, read N- to C-terminus: Lysine--tRNA ligase (521 aa).

The 'HIGH' region motif lies at 32 to 40 (PSGTVHIGN). The short motif at 280–284 (KISSS) is the 'KMSKS' region element.

The protein belongs to the class-I aminoacyl-tRNA synthetase family.

Its subcellular location is the cytoplasm. The catalysed reaction is tRNA(Lys) + L-lysine + ATP = L-lysyl-tRNA(Lys) + AMP + diphosphate. The chain is Lysine--tRNA ligase (lysS) from Borreliella burgdorferi (strain ATCC 35210 / DSM 4680 / CIP 102532 / B31) (Borrelia burgdorferi).